The chain runs to 189 residues: RPW8-like protein 1 (189 aa).

Residues 1 to 153 (MPLVELLTSA…ITRQPMDIIE (153 aa)) enclose the RPW8 domain. The helical transmembrane segment at 7 to 24 (LTSAALGLSLQLLHDAII) threads the bilayer. Coiled-coil stretches lie at residues 65 to 92 (FRKV…LKLR) and 126 to 147 (DIKK…ITRQ). Asn177 carries N-linked (GlcNAc...) asparagine glycosylation.

Belongs to the plant RPW8 protein family.

The protein resides in the membrane. Functionally, probable disease resistance (R) protein. This Arabidopsis thaliana (Mouse-ear cress) protein is RPW8-like protein 1.